Here is a 1798-residue protein sequence, read N- to C-terminus: DNA polymerase II large subunit (1798 aa).

The interval 286–309 is disordered; it reads EKGKSSEENKDESKAEDTGTESVA. One can recognise a DOD-type homing endonuclease domain in the interval 1184-1319; that stretch reads VVGYYLAEGY…ETLLLAKFGI (136 aa). The tract at residues 1699-1798 is disordered; that stretch reads TGHSNGKNGY…GISLDEFFGS (100 aa). Residues 1714-1731 show a composition bias toward low complexity; the sequence is GKNGKASKKSGSLASKLS. The segment covering 1733–1753 has biased composition (basic and acidic residues); that stretch reads KGKEPSKKKESAKPKRSEKVK.

It belongs to the archaeal DNA polymerase II family. As to quaternary structure, heterodimer of a large subunit and a small subunit. This protein undergoes a protein self splicing that involves a post-translational excision of the intervening region (intein) followed by peptide ligation.

It carries out the reaction DNA(n) + a 2'-deoxyribonucleoside 5'-triphosphate = DNA(n+1) + diphosphate. The enzyme catalyses Exonucleolytic cleavage in the 3'- to 5'-direction to yield nucleoside 5'-phosphates.. Its function is as follows. Possesses two activities: a DNA synthesis (polymerase) and an exonucleolytic activity that degrades single-stranded DNA in the 3'- to 5'-direction. Has a template-primer preference which is characteristic of a replicative DNA polymerase. This Thermococcus kodakarensis (strain ATCC BAA-918 / JCM 12380 / KOD1) (Pyrococcus kodakaraensis (strain KOD1)) protein is DNA polymerase II large subunit (polC).